The primary structure comprises 1031 residues: MQTFSNINLVKPSRDWRVEKGDIDENNSGSINNRPLSPTLFSSNSSNNNNNNTTNNYIAVNGNLVLGVNGVGVGEQAQSLDIAVENPEECILWYYNYFLGKSHQNYLGTLDNGDVFGASIKKEEYAIEGEYSYKTIIWTLEGIERQWFQLKKHASTTPTDIIKKALPRLQIKKIKEIDSPDLLKDFKDLEQTQTEINYKFGLLLARPNQSSEDDFYNNVEHSPKWTEFLNLLGDTVVLNSFKGYRGGLDVNNNTTGTHSLYTSLKGYEVMFHVSTMLPHSKADSQQIERKRHLGNDIVIIIFYDCDPSDPIIPWDPSTVNSNFNHIFAVVRPADENNYHVEIVIKHGIAKFGPVLPTHSIFPKNSTFKEFLITKLVNAQRAALNSAPSFATKLKRTFKDQLESIYKKHSSSSSSLSFVPKRRSSSVSNINKGRELKVKDPKYGSGFFKLLSKDSNKTQVFDTEILFSKSLNEKINCLDVVESDENNSTLIVATEESIYLLKSNMITGEQLFQKIIVMKDVIRLTLVKPLKILLVLTGKGLCFFEMDTIFQQFNNLSTNSTIPSSYAIPIPTTPTTSNNNGGSGFFSSNNLSNGHTSLRWSKSGIIAAGLINNNNNSNSINSINSNNNNNINNSSINNNNGGNTNILAPSVFLSVNNNNNNSGNNIFNNNNNNNNNGGLNNSSENILTVIGEDSIKVKKIVGTKGCTVYGYTKGDNEGQEEDITLLYVGLKKTLLLYEWNKGEFVKSRELPLMDNIKTLCAIAPGMICVGIQKEFLLIDIFTQTIKELYKKSDSEPVKALSLDNEILLCFNNIGIFVDESGNKTRQFELKWGSTPSSLALVPSYVLGISGPLIEVRTLLNGNIIQSLPANISLSNDDCNLDNHYHHHEIINNCSAINIVNNQLSDNIENINNLNINNNNGNNNYNNNGNNSNGGNNNNNNNNNNGCNNSLINLDQETNNLMSENSNNGAENVYSFSTFNDIAHVDNGNIYVASSSKGLSCILRIKQNIQLNVLPSPSSSPLKPSLLLPPSPL.

The disordered stretch occupies residues Val18–Asn48. The span at Asn26 to Phe41 shows a compositional bias: polar residues. The Rap-GAP domain maps to Phe186–Ile404. The CNH domain occupies Asn471–Asn881. The interval Asn920–Ile950 is disordered.

The chain is GTPase-activating protein DDB_G0291510 from Dictyostelium discoideum (Social amoeba).